The primary structure comprises 468 residues: ATP synthase subunit beta (468 aa).

Residue 150–157 (GGAGVGKT) coordinates ATP.

This sequence belongs to the ATPase alpha/beta chains family. In terms of assembly, F-type ATPases have 2 components, CF(1) - the catalytic core - and CF(0) - the membrane proton channel. CF(1) has five subunits: alpha(3), beta(3), gamma(1), delta(1), epsilon(1). CF(0) has three main subunits: a(1), b(2) and c(9-12). The alpha and beta chains form an alternating ring which encloses part of the gamma chain. CF(1) is attached to CF(0) by a central stalk formed by the gamma and epsilon chains, while a peripheral stalk is formed by the delta and b chains.

It localises to the cell inner membrane. It catalyses the reaction ATP + H2O + 4 H(+)(in) = ADP + phosphate + 5 H(+)(out). Produces ATP from ADP in the presence of a proton gradient across the membrane. The catalytic sites are hosted primarily by the beta subunits. This Acidovorax ebreus (strain TPSY) (Diaphorobacter sp. (strain TPSY)) protein is ATP synthase subunit beta.